We begin with the raw amino-acid sequence, 251 residues long: Intermembrane phospholipid transport system lipoprotein MlaA (251 aa).

An N-terminal signal peptide occupies residues 1–17; that stretch reads MKLRLSALALGTTLLVG. Cysteine 18 carries N-palmitoyl cysteine lipidation. Cysteine 18 carries the S-diacylglycerol cysteine lipid modification. Positions 228–251 are disordered; it reads GELKPQENPNAQAIQDDLKDIDSE.

It belongs to the MlaA family.

Its subcellular location is the cell outer membrane. Its function is as follows. Involved in a phospholipid transport pathway that maintains lipid asymmetry in the outer membrane by retrograde trafficking of phospholipids from the outer membrane to the inner membrane. Required for intercellular spreading of S.flexneri. In Shigella flexneri, this protein is Intermembrane phospholipid transport system lipoprotein MlaA.